The primary structure comprises 351 residues: Methionine import ATP-binding protein MetN (351 aa).

The ABC transporter domain occupies 2 to 241 (IVTEALTKAF…PQHAVTRAFV (240 aa)). 38–45 (GRSGAGKS) serves as a coordination point for ATP.

Belongs to the ABC transporter superfamily. Methionine importer (TC 3.A.1.24) family. The complex is composed of two ATP-binding proteins (MetN), two transmembrane proteins (MetI) and a solute-binding protein (MetQ).

Its subcellular location is the cell inner membrane. It catalyses the reaction L-methionine(out) + ATP + H2O = L-methionine(in) + ADP + phosphate + H(+). The enzyme catalyses D-methionine(out) + ATP + H2O = D-methionine(in) + ADP + phosphate + H(+). Part of the ABC transporter complex MetNIQ involved in methionine import. Responsible for energy coupling to the transport system. This chain is Methionine import ATP-binding protein MetN, found in Rhodospirillum rubrum (strain ATCC 11170 / ATH 1.1.1 / DSM 467 / LMG 4362 / NCIMB 8255 / S1).